Reading from the N-terminus, the 334-residue chain is Dual specificity mitogen-activated protein kinase kinase 6 (334 aa).

Residues 1 to 11 (MSQSKGKKRNP) show a composition bias toward basic residues. Positions 1–34 (MSQSKGKKRNPGLKIPKEAFEQPQTSSTPPRDLD) are disordered. Residues 4-19 (SKGKKRNPGLKIPKEA) are d domain. Positions 53–314 (LEPIVELGRG…YPELMQHPFF (262 aa)) constitute a Protein kinase domain. ATP is bound by residues 59–67 (LGRGAYGVV) and K82. Residue D179 is the Proton acceptor of the active site. S207 carries the phosphoserine; by MAPK3 modification. The residue at position 211 (T211) is a Phosphothreonine; by MAPK3. A DVD domain region spans residues 311–334 (HPFFTVHESKAADVASFVKLILGD).

This sequence belongs to the protein kinase superfamily. STE Ser/Thr protein kinase family. MAP kinase kinase subfamily. As to quaternary structure, dimer. Interacts (via its D domain) with its substrates MAPK11, MAPK12, MAPK13 and MAPK14. Interacts (via its DVD domain) with MAP3Ks activators like MAP3K5/ASK1, MAP3K1/MEKK1, MAP3K2/MEKK2, MAP3K3/MEKK3, MAP3K4/MEKK4, MAP3K7/TAK1, MAP3K11/MLK3 and MAP3K17/TAOK2. Interacts with DCTN1. Interacts with EIF2AK2/PKR. Weakly autophosphorylated. Phosphorylated at Ser-207 and Thr-211 by the majority of M3Ks, such as MAP3K5/ASK1, MAP3K1/MEKK1, MAP3K2/MEKK2, MAP3K3/MEKK3, MAP3K4/MEKK4, MAP3K7/TAK1, MAP3K11/MLK3 and MAP3K17/TAOK2. Post-translationally, in response to genotoxic stress, MAP3K-phosphorylated MAP2K6 is ubiquitinated and degraded by the SCF(FBXO31) complex.

The protein resides in the nucleus. It localises to the cytoplasm. It is found in the cytoskeleton. The catalysed reaction is L-seryl-[protein] + ATP = O-phospho-L-seryl-[protein] + ADP + H(+). It carries out the reaction L-threonyl-[protein] + ATP = O-phospho-L-threonyl-[protein] + ADP + H(+). It catalyses the reaction L-tyrosyl-[protein] + ATP = O-phospho-L-tyrosyl-[protein] + ADP + H(+). With respect to regulation, activated by dual phosphorylation on Ser-207 and Thr-211 in response to a variety of cellular stresses, including UV radiation, osmotic shock, hypoxia, inflammatory cytokines, interferon gamma (IFNG), and less often by growth factors. MAP2K6/MKK6 is activated by the majority of M3Ks, such as MAP3K5/ASK1, MAP3K1/MEKK1, MAP3K2/MEKK2, MAP3K3/MEKK3, MAP3K4/MEKK4, MAP3K7/TAK1, MAP3K11/MLK3 and MAP3K17/TAOK2. Dual specificity protein kinase which acts as an essential component of the MAP kinase signal transduction pathway. With MAP3K3/MKK3, catalyzes the concomitant phosphorylation of a threonine and a tyrosine residue in the MAP kinases p38 MAPK11, MAPK12, MAPK13 and MAPK14 and plays an important role in the regulation of cellular responses to cytokines and all kinds of stresses. Especially, MAP2K3/MKK3 and MAP2K6/MKK6 are both essential for the activation of MAPK11 and MAPK13 induced by environmental stress, whereas MAP2K6/MKK6 is the major MAPK11 activator in response to TNF. MAP2K6/MKK6 also phosphorylates and activates PAK6. The p38 MAP kinase signal transduction pathway leads to direct activation of transcription factors. Nuclear targets of p38 MAP kinase include the transcription factors ATF2 and ELK1. Within the p38 MAPK signal transduction pathway, MAP3K6/MKK6 mediates phosphorylation of STAT4 through MAPK14 activation, and is therefore required for STAT4 activation and STAT4-regulated gene expression in response to IL-12 stimulation. The pathway is also crucial for IL-6-induced SOCS3 expression and down-regulation of IL-6-mediated gene induction; and for IFNG-dependent gene transcription. Has a role in osteoclast differentiation through NF-kappa-B transactivation by TNFSF11, and in endochondral ossification and since SOX9 is another likely downstream target of the p38 MAPK pathway. MAP2K6/MKK6 mediates apoptotic cell death in thymocytes. Acts also as a regulator for melanocytes dendricity, through the modulation of Rho family GTPases. The protein is Dual specificity mitogen-activated protein kinase kinase 6 (Map2k6) of Mus musculus (Mouse).